Here is a 188-residue protein sequence, read N- to C-terminus: RxLR effector protein Avh241 (188 aa).

The N-terminal stretch at 1–16 (MRQYCLLLIVLALAAA) is a signal peptide. Positions 43 to 58 (RLLRSEPQDEDTFEDR) match the RxLR-dEER motif. A Host plasma membrane localization motif motif is present at residues 73–78 (GAAKAK).

This sequence belongs to the RxLR effector family.

The protein resides in the secreted. It localises to the host cell membrane. Effector that triggers cell death in a variety of plant species (including tobacco, tomato and soybean), regardless of the Rps genes present. Avh241 interacts with the plant immune system via at least two different mechanisms, one recognized by plants dependent on subcellular localization and one promoting infection independent on membrane localization. The cell death triggered by Avh241 in N.benthamiana requires the two host mitogen-activated protein kinases, MEK2 and WIPK. The sequence is that of RxLR effector protein Avh241 from Phytophthora sojae (strain P6497) (Soybean stem and root rot agent).